A 101-amino-acid chain; its full sequence is Urease subunit beta (101 aa).

The protein belongs to the urease beta subunit family. In terms of assembly, heterotrimer of UreA (gamma), UreB (beta) and UreC (alpha) subunits. Three heterotrimers associate to form the active enzyme.

It is found in the cytoplasm. The catalysed reaction is urea + 2 H2O + H(+) = hydrogencarbonate + 2 NH4(+). Its pathway is nitrogen metabolism; urea degradation; CO(2) and NH(3) from urea (urease route): step 1/1. This is Urease subunit beta from Burkholderia orbicola (strain AU 1054).